Here is a 256-residue protein sequence, read N- to C-terminus: uncharacterized protein (256 aa).

A signal peptide spans 1 to 24 (MIKRVNKLVIGISLLFLVISITAG). Cys25 is lipidated: N-palmitoyl cysteine. The S-diacylglycerol cysteine moiety is linked to residue Cys25.

The protein belongs to the staphylococcal tandem lipoprotein family.

Its subcellular location is the cell membrane. This is an uncharacterized protein from Staphylococcus aureus (strain bovine RF122 / ET3-1).